Reading from the N-terminus, the 83-residue chain is Putative regulatory protein FMG_0656 (83 aa).

This sequence belongs to the RemA family.

In Finegoldia magna (strain ATCC 29328 / DSM 20472 / WAL 2508) (Peptostreptococcus magnus), this protein is Putative regulatory protein FMG_0656.